The sequence spans 123 residues: Putative hypoxanthine phosphoribosyltransferase (123 aa).

May play a role in purine salvage. This is Putative hypoxanthine phosphoribosyltransferase from Methanosarcina mazei (strain ATCC BAA-159 / DSM 3647 / Goe1 / Go1 / JCM 11833 / OCM 88) (Methanosarcina frisia).